Consider the following 439-residue polypeptide: MATTTSCSLLLSSTLFLHSPPSSHLSFFNLSSSRSSPISLYPIRSKRYFRILSKLSLNDNNRDDDDDTLHFTPFSAVKPFFLLCTSVALSFSLFAASPAVESASAFVVSTPKKLQTDELATVRLFQENTPSVVYITNLAVRQDAFTLDVLEVPQGSGSGFVWDKQGHIVTNYHVIRGASDLRVTLADQTTFDAKVVGFDQDKDVAVLRIDAPKNKLRPIPVGVSADLLVGQKVFAIGNPFGLDHTLTTGVISGLRREISSAATGRPIQDVIQTDAAINPGNSGGPLLDSSGTLIGINTAIYSPSGASSGVGFSIPVDTVGGIVDQLVRFGKVTRPILGIKFAPDQSVEQLGVSGVLVLDAPPSGPAGKAGLQSTKRDGYGRLVLGDIITSVNGTKVSNGSDLYRILDQCKVGDEVTVEVLRGDHKEKISVTLEPKPDES.

The serine protease stretch occupies residues 154–323; the sequence is QGSGSGFVWD…IPVDTVGGIV (170 aa). Catalysis depends on charge relay system residues H173, D203, and S282. Positions 326–423 constitute a PDZ domain; it reads LVRFGKVTRP…EVTVEVLRGD (98 aa).

It belongs to the peptidase S1C family. Interacts with PTAC16 and other potential targets for degradation under high light conditions.

The protein resides in the plastid. The protein localises to the chloroplast thylakoid membrane. Its activity is regulated as follows. Inhibited by phenylmethylsulfonyl fluoride and O-phenanthroline. Serine protease that is required at high temperature. May be involved in the degradation of damaged proteins. In vivo, can degrade beta-casein. The chain is Protease Do-like 1, chloroplastic (DEGP1) from Arabidopsis thaliana (Mouse-ear cress).